A 208-amino-acid polypeptide reads, in one-letter code: Large ribosomal subunit protein uL3 (208 aa).

Positions 122 to 148 are disordered; sequence KRHGQSRGPMAHGSRYHRRPGSMGPVA.

The protein belongs to the universal ribosomal protein uL3 family. Part of the 50S ribosomal subunit. Forms a cluster with proteins L14 and L19.

One of the primary rRNA binding proteins, it binds directly near the 3'-end of the 23S rRNA, where it nucleates assembly of the 50S subunit. The polypeptide is Large ribosomal subunit protein uL3 (Streptococcus pyogenes serotype M1).